Reading from the N-terminus, the 179-residue chain is Bifunctional protein PyrR (179 aa).

Positions 99-111 (VILVDDVLYTGRT) match the PRPP-binding motif.

This sequence belongs to the purine/pyrimidine phosphoribosyltransferase family. PyrR subfamily. As to quaternary structure, homodimer and homohexamer; in equilibrium.

It carries out the reaction UMP + diphosphate = 5-phospho-alpha-D-ribose 1-diphosphate + uracil. Regulates transcriptional attenuation of the pyrimidine nucleotide (pyr) operon by binding in a uridine-dependent manner to specific sites on pyr mRNA. This disrupts an antiterminator hairpin in the RNA and favors formation of a downstream transcription terminator, leading to a reduced expression of downstream genes. Functionally, also displays a weak uracil phosphoribosyltransferase activity which is not physiologically significant. This chain is Bifunctional protein PyrR, found in Brevibacillus brevis (strain 47 / JCM 6285 / NBRC 100599).